The sequence spans 295 residues: Putative F-box protein At5g44220 (295 aa).

The region spanning 56–102 is the F-box domain; the sequence is STNSDLLPMDLIKEILKRLPAKTLARFLCVSKLWSSIIRSRDLMKLF.

This chain is Putative F-box protein At5g44220, found in Arabidopsis thaliana (Mouse-ear cress).